An 841-amino-acid chain; its full sequence is Formin-like protein 10 (841 aa).

The first 25 residues, 1-25 (MDGLCYVIFIIFSLLSCAFSPLSYA), serve as a signal peptide directing secretion. Residues 102-122 (LIPAISAVLAAATLIALAFFF) form a helical membrane-spanning segment. 3 disordered regions span residues 137–166 (SKSL…QNKL), 254–297 (ISSH…RTVR), and 403–512 (KSSW…SKQR). The segment covering 139–152 (SLASDISQSQQQTL) has biased composition (polar residues). Low complexity predominate over residues 254–278 (ISSHSDSPAMSPSAAMSPPMNSTAP). The span at 279 to 293 (HWSTNQNTHSPSSPE) shows a compositional bias: polar residues. The segment covering 426–444 (LPPPQRPPPAMPEPPPLVP) has biased composition (pro residues). The 373-residue stretch at 469–841 (EGTTDRPKPK…KKMEVTSSLA (373 aa)) folds into the FH2 domain. Residues 502 to 512 (YNSSNANSKQR) are compositionally biased toward polar residues.

It belongs to the formin-like family. Class-I subfamily.

Its subcellular location is the membrane. In terms of biological role, might be involved in the organization and polarity of the actin cytoskeleton. In Arabidopsis thaliana (Mouse-ear cress), this protein is Formin-like protein 10 (FH10).